The sequence spans 332 residues: 4-hydroxyproline 2-epimerase 2 (332 aa).

C89 (proton acceptor) is an active-site residue. Substrate is bound by residues H222, D248, and 253 to 254; that span reads GT.

It belongs to the proline racemase family.

The catalysed reaction is trans-4-hydroxy-L-proline = cis-4-hydroxy-D-proline. Its function is as follows. Catalyzes the epimerization of trans-4-hydroxy-L-proline (t4LHyp) to cis-4-hydroxy-D-proline (c4DHyp). Is likely involved in a degradation pathway that converts t4LHyp to alpha-ketoglutarate. Displays no proline racemase activity. The protein is 4-hydroxyproline 2-epimerase 2 of Rhizobium rhizogenes (strain K84 / ATCC BAA-868) (Agrobacterium radiobacter).